The following is a 347-amino-acid chain: Rhodopsin (347 aa).

Residues 1–33 (TEGPDFYIPMVNTTGVVRSPYEYPQYYLVNPAA) are Extracellular-facing. N12 carries N-linked (GlcNAc...) asparagine glycosylation. A helical transmembrane segment spans residues 34–58 (YAVLGAYMFFLIIVGFPINFLTLYV). Over 59 to 70 (TLEHKKLRTPLN) the chain is Cytoplasmic. The helical transmembrane segment at 71-93 (YILLNLAVADLFMVIGGFTTTMY) threads the bilayer. At 94-107 (SSMHGYFVLGRLGC) the chain is on the extracellular side. A disulfide bond links C107 and C184. The chain crosses the membrane as a helical span at residues 108–130 (NIEGFFATLGGMISLWSLAVLAI). The 'Ionic lock' involved in activated form stabilization motif lies at 131–133 (ERW). At 131–149 (ERWVVVCKPISNFRFGENH) the chain is on the cytoplasmic side. The helical transmembrane segment at 150 to 170 (AIMGVSLTWVMALACTVPPLV) threads the bilayer. The Extracellular segment spans residues 171 to 199 (GWSRYIPEGMQCACGIDYYTRAEGYNNES). N-linked (GlcNAc...) asparagine glycosylation is present at N197. Residues 200-221 (FVIYMFTFHFLFPMFIIFFCYG) traverse the membrane as a helical segment. Over 222–249 (RLLCAVKEAAAAQQESETTQRAEREVTR) the chain is Cytoplasmic. A helical transmembrane segment spans residues 250–271 (MVILMVIGYLVCWLPYASVAWF). Residues 272 to 283 (IFTHKGSEFGPL) are Extracellular-facing. Residues 284 to 305 (FMAVPSFFAKSSSIYNPIIYIC) traverse the membrane as a helical segment. K293 carries the N6-(retinylidene)lysine modification. Over 306–347 (MNKQFRQCMITTLFCGKNPFEGQEEDSSTKTEASSASSVSPA) the chain is Cytoplasmic. C320 carries the S-palmitoyl cysteine lipid modification. Residues 326–347 (EGQEEDSSTKTEASSASSVSPA) form a disordered region. Residues 335–347 (KTEASSASSVSPA) show a composition bias toward low complexity.

Belongs to the G-protein coupled receptor 1 family. Opsin subfamily. Post-translationally, phosphorylated on some or all of the serine and threonine residues present in the C-terminal region. Contains one covalently linked retinal chromophore.

The protein resides in the membrane. It is found in the cell projection. It localises to the cilium. Its subcellular location is the photoreceptor outer segment. Functionally, photoreceptor required for image-forming vision at low light intensity. While most salt water fish species use retinal as chromophore, most freshwater fish use 3-dehydroretinal, or a mixture of retinal and 3-dehydroretinal. Light-induced isomerization of 11-cis to all-trans retinal triggers a conformational change that activates signaling via G-proteins. Subsequent receptor phosphorylation mediates displacement of the bound G-protein alpha subunit by arrestin and terminates signaling. This chain is Rhodopsin (rho), found in Sargocentron spiniferum (Sabre squirrelfish).